The chain runs to 71 residues: Large ribosomal subunit protein bL31 (71 aa).

Zn(2+) is bound by residues cysteine 16, cysteine 18, cysteine 38, and cysteine 41.

It belongs to the bacterial ribosomal protein bL31 family. Type A subfamily. In terms of assembly, part of the 50S ribosomal subunit. Requires Zn(2+) as cofactor.

In terms of biological role, binds the 23S rRNA. In Francisella tularensis subsp. mediasiatica (strain FSC147), this protein is Large ribosomal subunit protein bL31.